We begin with the raw amino-acid sequence, 258 residues long: Type II restriction enzyme HindII (258 aa).

The catalysed reaction is Endonucleolytic cleavage of DNA to give specific double-stranded fragments with terminal 5'-phosphates.. A P subtype restriction enzyme that recognizes the double-stranded sequence 5'-GTYRAC-3' and cleaves after Y-3. This Haemophilus influenzae (strain ATCC 51907 / DSM 11121 / KW20 / Rd) protein is Type II restriction enzyme HindII (hindIIR).